The following is a 633-amino-acid chain: Threonine--tRNA ligase (633 aa).

One can recognise a TGS domain in the interval 1-61; that stretch reads MINIHFSNNL…IENCTFEVIT (61 aa). The interval 242–533 is catalytic; sequence DHRKIGRELE…LIEHHSGKFP (292 aa). The Zn(2+) site is built by Cys333, His384, and His510.

Belongs to the class-II aminoacyl-tRNA synthetase family. As to quaternary structure, homodimer. Zn(2+) is required as a cofactor.

It localises to the cytoplasm. The catalysed reaction is tRNA(Thr) + L-threonine + ATP = L-threonyl-tRNA(Thr) + AMP + diphosphate + H(+). Catalyzes the attachment of threonine to tRNA(Thr) in a two-step reaction: L-threonine is first activated by ATP to form Thr-AMP and then transferred to the acceptor end of tRNA(Thr). Also edits incorrectly charged L-seryl-tRNA(Thr). The sequence is that of Threonine--tRNA ligase from Ehrlichia chaffeensis (strain ATCC CRL-10679 / Arkansas).